We begin with the raw amino-acid sequence, 83 residues long: Evasin P1124 (83 aa).

Residues 1 to 28 (MAVNVFTILQLAVFAAIVLNVNLHSVSA) form the signal peptide. Disulfide bonds link C48–C66, C52–C68, and C62–C79. The N-linked (GlcNAc...) asparagine glycan is linked to N51.

The protein localises to the secreted. Functionally, salivary chemokine-binding protein which binds to host chemokines CXCL1, CXCL2, CXCL3, CXCL5, CXCL6, CXCL12 and CXCL13. This Ixodes ricinus (Common tick) protein is Evasin P1124.